Reading from the N-terminus, the 184-residue chain is CKLF-like MARVEL transmembrane domain-containing protein 3 (184 aa).

Acidic residues predominate over residues 1 to 12 (MWPPDAEPEPDP). Positions 1 to 22 (MWPPDAEPEPDPESAHGPRSGR) are disordered. One can recognise an MARVEL domain in the interval 36–155 (FLCSLKGRLL…DFYLIFNEVA (120 aa)). 3 helical membrane passes run 64-84 (ASAF…FLFA), 96-116 (LCWP…YFVI), and 131-151 (AAGV…YLIF). A disordered region spans residues 163 to 184 (SGNETTAHRTEEENSNSDSDSD). Acidic residues predominate over residues 175-184 (ENSNSDSDSD).

It belongs to the chemokine-like factor family.

It localises to the membrane. The protein is CKLF-like MARVEL transmembrane domain-containing protein 3 (Cmtm3) of Mus musculus (Mouse).